The primary structure comprises 855 residues: Pre-mRNA-splicing factor SYF1 (855 aa).

HAT repeat units lie at residues 15–47 (LVFE…FKQG), 48–80 (APKP…ARRA), 90–122 (PAYE…FLMD), 124–158 (GRVT…FLRS), 160–192 (PLPE…SSDR), 198–230 (QRLA…LISQ), 235–268 (VQSL…YYIR), 270–305 (GHFE…FEES), and 369–407 (GRPR…FYED). Lys420 carries the post-translational modification N6-acetyllysine. 5 HAT repeats span residues 498-530 (GTFQ…FLEE), 532-566 (KYFE…KFIS), 571-605 (RKLE…LEEE), 643-677 (YGVT…MECK), and 679-713 (GEID…FEVR). The disordered stretch occupies residues 808–855 (AELAQQANPEEIQLGEDEDEDEMDLEPNEVRLEQQSVPAAVFGSLKED). Acidic residues predominate over residues 820 to 834 (QLGEDEDEDEMDLEP). Ser851 bears the Phosphoserine mark.

It belongs to the crooked-neck family. Associates with RNA polymerase II, the TCR-specific proteins CKN1/CSA and ERCC6/CSB, and XPA. Identified in the spliceosome C complex. Component of the XAB2 complex, a multimeric protein complex composed of XAB2, PRPF19, AQR, ZNF830, ISY1, and PPIE. Identified in a pentameric intron-binding (IB) complex composed of AQR, XAB2, ISY1, ZNF830 and PPIE that is incorporated into the spliceosome as a preassembled complex. The IB complex does not contain PRPF19.

The protein localises to the nucleus. Involved in pre-mRNA splicing as component of the spliceosome. Involved in transcription-coupled repair (TCR), transcription and pre-mRNA splicing. The chain is Pre-mRNA-splicing factor SYF1 (Xab2) from Mus musculus (Mouse).